A 574-amino-acid chain; its full sequence is Sulfate adenylyltransferase (574 aa).

The segment at 1–169 (MSNPPHGGVL…VEAINKLNHY (169 aa)) is N-terminal. The tract at residues 170–394 (DYVALRYTPA…LRESSRPRST (225 aa)) is catalytic. Glutamine 197 is a sulfate binding site. ATP is bound by residues 197 to 200 (QTRN) and 291 to 294 (GRDH). Residues threonine 198, arginine 199, and asparagine 200 contribute to the active site. Arginine 199 is a binding site for sulfate. Position 295 (alanine 295) interacts with sulfate. Valine 333 provides a ligand contact to ATP. The allosteric regulation domain; adenylyl-sulfate kinase-like stretch occupies residues 395–574 (QGFTIFLTGY…LETEGFFDRA (180 aa)). 3'-phosphoadenylyl sulfate contacts are provided by residues 434–437 (DTVR), arginine 451, 477–478 (IA), and arginine 516.

This sequence in the N-terminal section; belongs to the sulfate adenylyltransferase family. It in the C-terminal section; belongs to the APS kinase family. Homohexamer. Dimer of trimers.

It localises to the cytoplasm. It carries out the reaction sulfate + ATP + H(+) = adenosine 5'-phosphosulfate + diphosphate. It participates in sulfur metabolism; hydrogen sulfide biosynthesis; sulfite from sulfate: step 1/3. Allosterically inhibited by 3'-phosphoadenosine 5'-phosphosulfate (PAPS). Functionally, catalyzes the first intracellular reaction of sulfate assimilation, forming adenosine-5'-phosphosulfate (APS) from inorganic sulfate and ATP. Plays an important role in sulfate activation as a component of the biosynthesis pathway of sulfur-containing amino acids. This is Sulfate adenylyltransferase from Aspergillus clavatus (strain ATCC 1007 / CBS 513.65 / DSM 816 / NCTC 3887 / NRRL 1 / QM 1276 / 107).